The chain runs to 490 residues: Betaine aldehyde dehydrogenase (490 aa).

Aspartate 93 is a K(+) binding site. 150 to 152 (GAW) is an NAD(+) binding site. Catalysis depends on lysine 162, which acts as the Charge relay system. 176–179 (KPSE) provides a ligand contact to NAD(+). Valine 180 is a binding site for K(+). 230–233 (GVKT) contributes to the NAD(+) binding site. K(+) is bound at residue leucine 246. Catalysis depends on glutamate 252, which acts as the Proton acceptor. Glycine 254, cysteine 286, and glutamate 387 together coordinate NAD(+). The Nucleophile role is filled by cysteine 286. At cysteine 286 the chain carries Cysteine sulfenic acid (-SOH). K(+)-binding residues include lysine 457 and glycine 460. Glutamate 464 functions as the Charge relay system in the catalytic mechanism.

It belongs to the aldehyde dehydrogenase family. As to quaternary structure, dimer of dimers. K(+) is required as a cofactor.

It catalyses the reaction betaine aldehyde + NAD(+) + H2O = glycine betaine + NADH + 2 H(+). It functions in the pathway amine and polyamine biosynthesis; betaine biosynthesis via choline pathway; betaine from betaine aldehyde: step 1/1. Its function is as follows. Involved in the biosynthesis of the osmoprotectant glycine betaine. Catalyzes the irreversible oxidation of betaine aldehyde to the corresponding acid. The protein is Betaine aldehyde dehydrogenase of Serratia proteamaculans (strain 568).